The following is a 469-amino-acid chain: UDP-N-acetylmuramate--L-alanine ligase (469 aa).

Position 119 to 125 (119 to 125 (GTHGKTT)) interacts with ATP.

The protein belongs to the MurCDEF family.

Its subcellular location is the cytoplasm. The enzyme catalyses UDP-N-acetyl-alpha-D-muramate + L-alanine + ATP = UDP-N-acetyl-alpha-D-muramoyl-L-alanine + ADP + phosphate + H(+). The protein operates within cell wall biogenesis; peptidoglycan biosynthesis. Functionally, cell wall formation. The sequence is that of UDP-N-acetylmuramate--L-alanine ligase from Ruthia magnifica subsp. Calyptogena magnifica.